Here is a 347-residue protein sequence, read N- to C-terminus: Phosphoribosylformylglycinamidine cyclo-ligase (347 aa).

Belongs to the AIR synthase family.

Its subcellular location is the cytoplasm. It catalyses the reaction 2-formamido-N(1)-(5-O-phospho-beta-D-ribosyl)acetamidine + ATP = 5-amino-1-(5-phospho-beta-D-ribosyl)imidazole + ADP + phosphate + H(+). The protein operates within purine metabolism; IMP biosynthesis via de novo pathway; 5-amino-1-(5-phospho-D-ribosyl)imidazole from N(2)-formyl-N(1)-(5-phospho-D-ribosyl)glycinamide: step 2/2. This chain is Phosphoribosylformylglycinamidine cyclo-ligase, found in Yersinia pseudotuberculosis serotype IB (strain PB1/+).